A 274-amino-acid polypeptide reads, in one-letter code: 2,3,4,5-tetrahydropyridine-2,6-dicarboxylate N-succinyltransferase (274 aa).

Residues Arg107 and Asp144 each contribute to the substrate site.

The protein belongs to the transferase hexapeptide repeat family. As to quaternary structure, homotrimer.

It is found in the cytoplasm. It carries out the reaction (S)-2,3,4,5-tetrahydrodipicolinate + succinyl-CoA + H2O = (S)-2-succinylamino-6-oxoheptanedioate + CoA. Its pathway is amino-acid biosynthesis; L-lysine biosynthesis via DAP pathway; LL-2,6-diaminopimelate from (S)-tetrahydrodipicolinate (succinylase route): step 1/3. The polypeptide is 2,3,4,5-tetrahydropyridine-2,6-dicarboxylate N-succinyltransferase (Cereibacter sphaeroides (strain ATCC 17023 / DSM 158 / JCM 6121 / CCUG 31486 / LMG 2827 / NBRC 12203 / NCIMB 8253 / ATH 2.4.1.) (Rhodobacter sphaeroides)).